We begin with the raw amino-acid sequence, 205 residues long: dITP/XTP pyrophosphatase (205 aa).

A substrate-binding site is contributed by 16–21 (TGNPGK). 2 residues coordinate Mg(2+): E48 and D77. Residue D77 is the Proton acceptor of the active site. Substrate-binding positions include S78, 162-165 (FGYD), K185, and 190-191 (HR).

Belongs to the HAM1 NTPase family. Homodimer. Requires Mg(2+) as cofactor.

It catalyses the reaction XTP + H2O = XMP + diphosphate + H(+). It carries out the reaction dITP + H2O = dIMP + diphosphate + H(+). The enzyme catalyses ITP + H2O = IMP + diphosphate + H(+). Its function is as follows. Pyrophosphatase that catalyzes the hydrolysis of nucleoside triphosphates to their monophosphate derivatives, with a high preference for the non-canonical purine nucleotides XTP (xanthosine triphosphate), dITP (deoxyinosine triphosphate) and ITP. Seems to function as a house-cleaning enzyme that removes non-canonical purine nucleotides from the nucleotide pool, thus preventing their incorporation into DNA/RNA and avoiding chromosomal lesions. This is dITP/XTP pyrophosphatase from Erwinia tasmaniensis (strain DSM 17950 / CFBP 7177 / CIP 109463 / NCPPB 4357 / Et1/99).